The sequence spans 430 residues: Tol-Pal system protein TolB (430 aa).

Positions 1 to 21 (MKQAFRVALSVLMLFVAVAHA) are cleaved as a signal peptide.

Belongs to the TolB family. The Tol-Pal system is composed of five core proteins: the inner membrane proteins TolA, TolQ and TolR, the periplasmic protein TolB and the outer membrane protein Pal. They form a network linking the inner and outer membranes and the peptidoglycan layer.

The protein resides in the periplasm. Its function is as follows. Part of the Tol-Pal system, which plays a role in outer membrane invagination during cell division and is important for maintaining outer membrane integrity. TolB occupies a key intermediary position in the Tol-Pal system because it communicates directly with both membrane-embedded components, Pal in the outer membrane and TolA in the inner membrane. The chain is Tol-Pal system protein TolB from Erwinia tasmaniensis (strain DSM 17950 / CFBP 7177 / CIP 109463 / NCPPB 4357 / Et1/99).